The following is a 149-amino-acid chain: Sec-independent protein translocase protein TatB (149 aa).

The chain crosses the membrane as a helical span at residues methionine 1–glycine 21. The disordered stretch occupies residues valine 92–alanine 149. Residues asparagine 101–glutamine 111 are compositionally biased toward polar residues.

This sequence belongs to the TatB family. As to quaternary structure, the Tat system comprises two distinct complexes: a TatABC complex, containing multiple copies of TatA, TatB and TatC subunits, and a separate TatA complex, containing only TatA subunits. Substrates initially bind to the TatABC complex, which probably triggers association of the separate TatA complex to form the active translocon.

The protein localises to the cell inner membrane. In terms of biological role, part of the twin-arginine translocation (Tat) system that transports large folded proteins containing a characteristic twin-arginine motif in their signal peptide across membranes. Together with TatC, TatB is part of a receptor directly interacting with Tat signal peptides. TatB may form an oligomeric binding site that transiently accommodates folded Tat precursor proteins before their translocation. The protein is Sec-independent protein translocase protein TatB of Thiobacillus denitrificans (strain ATCC 25259 / T1).